The primary structure comprises 197 residues: Cytochrome c oxidase polypeptide 5, mitochondrial (197 aa).

The transit peptide at 1–13 directs the protein to the mitochondrion; the sequence is MFLRSVTRAAARS. The Mitochondrial matrix portion of the chain corresponds to 14–129; it reads SAVPTTGLRS…KGENLKIFFK (116 aa). Residues 130-147 traverse the membrane as a helical segment; that stretch reads VAQLTLVSFGIFYVIHLF. At 148–197 the chain is on the mitochondrial intermembrane side; that stretch reads AKPQPKTMTKEWQEASNEYAKQEKINPIYGISAEGYEGKGFVQSPPAEKQ.

Belongs to the cytochrome c oxidase IV family. Component of the cytochrome c oxidase (complex IV, CIV), a multisubunit enzyme composed of a catalytic core of 3 subunits and seevral supernumerary subunits. The complex exists as a monomer or a dimer and forms supercomplexes (SCs) in the inner mitochondrial membrane with ubiquinol-cytochrome c oxidoreductase (cytochrome b-c1 complex, complex III, CIII).

The protein resides in the mitochondrion inner membrane. The protein operates within energy metabolism; oxidative phosphorylation. Its function is as follows. Component of the cytochrome c oxidase, the last enzyme in the mitochondrial electron transport chain which drives oxidative phosphorylation. The respiratory chain contains 3 multisubunit complexes succinate dehydrogenase (complex II, CII), ubiquinol-cytochrome c oxidoreductase (cytochrome b-c1 complex, complex III, CIII) and cytochrome c oxidase (complex IV, CIV), that cooperate to transfer electrons derived from NADH and succinate to molecular oxygen, creating an electrochemical gradient over the inner membrane that drives transmembrane transport and the ATP synthase. Cytochrome c oxidase is the component of the respiratory chain that catalyzes the reduction of oxygen to water. Electrons originating from reduced cytochrome c in the intermembrane space (IMS) are transferred via the dinuclear copper A center (CU(A)) of subunit 2 and heme A of subunit 1 to the active site in subunit 1, a binuclear center (BNC) formed by heme A3 and copper B (CU(B)). The BNC reduces molecular oxygen to 2 water molecules using 4 electrons from cytochrome c in the IMS and 4 protons from the mitochondrial matrix. The chain is Cytochrome c oxidase polypeptide 5, mitochondrial (cox5) from Aspergillus niger.